The primary structure comprises 48 residues: Hemoglobin subunit beta-B (48 aa).

Positions 2–48 (EWTDAERGAILSLWGKIDPDELGPALLARXXLVYXXTQRYFASFGDL) constitute a Globin domain.

The protein belongs to the globin family. As to quaternary structure, heterotetramer of two alpha chains and two beta chains. In terms of tissue distribution, red blood cells.

Its function is as follows. Involved in oxygen transport from gills to the various peripheral tissues. In Catostomus clarkii (Desert sucker), this protein is Hemoglobin subunit beta-B.